Reading from the N-terminus, the 89-residue chain is Venom peptide BmKAPI (89 aa).

Positions 1-22 (MKFVFASFALFVIFLCFSQSLS) are cleaved as a signal peptide. Cystine bridges form between C28/C66, C37/C62, C41/C55, C46/C86, and C68/C80. A TIL domain is found at 28-86 (CRDNEVFDNCISNCGPPRCSNILNTYPCTNLGPLCTPGCKCKDGRVYDNQGRCVLQTEC).

It belongs to the serine protease inhibitor-like (TIL domain-containing) family. Expressed by the venom gland.

Its subcellular location is the secreted. Functionally, serine protease inhibitor. The protein is Venom peptide BmKAPI of Olivierus martensii (Manchurian scorpion).